We begin with the raw amino-acid sequence, 358 residues long: Peptide chain release factor 1 (358 aa).

The residue at position 236 (Gln236) is an N5-methylglutamine.

The protein belongs to the prokaryotic/mitochondrial release factor family. Post-translationally, methylated by PrmC. Methylation increases the termination efficiency of RF1.

Its subcellular location is the cytoplasm. Its function is as follows. Peptide chain release factor 1 directs the termination of translation in response to the peptide chain termination codons UAG and UAA. The protein is Peptide chain release factor 1 of Corynebacterium aurimucosum (strain ATCC 700975 / DSM 44827 / CIP 107346 / CN-1) (Corynebacterium nigricans).